The primary structure comprises 561 residues: FAD-binding monooxygenase tazF (561 aa).

FAD is bound by residues 74–77, 86–87, and Y92; these read TWLD and DI. 84–86 lines the NADP(+) pocket; it reads GCD. NADP(+) contacts are provided by residues 212-218 and 235-236; these read NGSSALQ and RH.

This sequence belongs to the FAD-binding monooxygenase family. Requires FAD as cofactor.

It functions in the pathway secondary metabolite biosynthesis. Functionally, FAD-binding monooxygenase; part of the gene cluster that mediates the biosynthesis of azaterrilone A and other azaphilones, a class of fungal metabolites characterized by a highly oxygenated pyrano-quinone bicyclic core and exhibiting a broad range of bioactivities. The first step of the pathway begins with the non-reducing polyketide synthase tazA that assembles one acetyl-CoA starter unit, five malonyl-CoA units, and catalyzes a series of Claisen condensations, methylation, PT-mediated cyclization, and finally releases the first hexaketide precursor through the R-domain. The tazA product then undergoes reduction on its terminal ketone and the following pyran-ring formation by yet undetermined enzyme(s). Dehydration and enoyl reduction, possibly involving the trans-enoyl reductase tazE leads to the next intermediate. TazD is predicted as an acetyltransferase and might catalyze the acetylation steps leading to the synthesis of azaterrilone A. Azaterrilone A is not the final product of the taz pathway and both the highly reducing polyketide synthase tazB and the dual enzyme tazHJ catalyze late steps of the pathway, leading to the production of the 2 final stereoisomers that contain additional polyketide modification whose structures have still to be determined. The sequence is that of FAD-binding monooxygenase tazF from Aspergillus terreus (strain NIH 2624 / FGSC A1156).